The primary structure comprises 415 residues: Tumor necrosis factor receptor superfamily member 3 (415 aa).

The first 30 residues, 1 to 30, serve as a signal peptide directing secretion; sequence MRLPRASSPCGLAWGPLLLGLSGLLVASQP. The Extracellular portion of the chain corresponds to 31 to 223; it reads QLVPPYRIEN…NPPEPGAMLL (193 aa). A glycan (N-linked (GlcNAc...) asparagine) is linked at Asn-40. 4 TNFR-Cys repeats span residues 42–81, 82–124, 125–170, and 171–213; these read TCWD…TVCK, TCPH…KAEC, RCQP…VNCV, and PCKP…TICK. Disulfide bonds link Cys-43–Cys-58, Cys-59–Cys-72, Cys-62–Cys-80, Cys-83–Cys-98, Cys-101–Cys-116, Cys-104–Cys-124, Cys-126–Cys-132, Cys-139–Cys-150, Cys-142–Cys-169, and Cys-172–Cys-187. N-linked (GlcNAc...) asparagine glycosylation is present at Asn-179. A helical transmembrane segment spans residues 224–244; the sequence is LAILLSLVLFLLFTTVLACAW. Topologically, residues 245-415 are cytoplasmic; that stretch reads MRHPSLCRKL…ETETLGCQDL (171 aa). The interval 261 to 304 is disordered; it reads HPEGEESPPCPAPRADPHFPDLAEPLLPMSGDLSPSPAGPPTAP. A Phosphoserine modification is found at Ser-315. The tract at residues 361–399 is disordered; the sequence is LGGTRGPGDPPAPPEPPYPTPEEGAPGPSELSTPYQEDG. The span at 368–380 shows a compositional bias: pro residues; that stretch reads GDPPAPPEPPYPT.

Self-associates; dimerization and trimerization are promoted by lymphotoxin (LTA(3)). Associates with TRAF3. Associates with TRAF4. Associates with TRAF5.

The protein resides in the membrane. Functionally, receptor for the heterotrimeric lymphotoxin containing LTA and LTB, and for TNFS14/LIGHT. Activates NF-kappa-B signaling upon stimulation with lymphotoxin. Promotes apoptosis via TRAF3 and TRAF5. May play a role in the development of lymphoid organs. Its function is as follows. (Microbial infection) Plays a role in host defense against Zika virus infection. This chain is Tumor necrosis factor receptor superfamily member 3 (Ltbr), found in Mus musculus (Mouse).